The primary structure comprises 124 residues: Multifunctional methyltransferase subunit TRM112 homolog B (124 aa).

In terms of domain architecture, TRM112 spans 2–120; the sequence is RLIVHNMLSC…SKGIPNMLLH (119 aa).

This sequence belongs to the TRM112 family. Interacts with TRM9. Expressed in anthers.

In terms of biological role, acts as an activator of both rRNA/tRNA and protein methyltransferases. Required for TRM9 tRNA methyltransferase activity. The polypeptide is Multifunctional methyltransferase subunit TRM112 homolog B (Arabidopsis thaliana (Mouse-ear cress)).